The chain runs to 66 residues: DNA-directed RNA polymerase subunit Rpo10 (66 aa).

Zn(2+) contacts are provided by Cys-7, Cys-10, Cys-44, and Cys-45.

The protein belongs to the archaeal Rpo10/eukaryotic RPB10 RNA polymerase subunit family. As to quaternary structure, part of the RNA polymerase complex. Requires Zn(2+) as cofactor.

The protein resides in the cytoplasm. It carries out the reaction RNA(n) + a ribonucleoside 5'-triphosphate = RNA(n+1) + diphosphate. In terms of biological role, DNA-dependent RNA polymerase (RNAP) catalyzes the transcription of DNA into RNA using the four ribonucleoside triphosphates as substrates. The sequence is that of DNA-directed RNA polymerase subunit Rpo10 from Pyrobaculum neutrophilum (strain DSM 2338 / JCM 9278 / NBRC 100436 / V24Sta) (Thermoproteus neutrophilus).